The following is a 463-amino-acid chain: Lipase 5 (463 aa).

Residues 1 to 14 (MLYLILFLIAPIYA) form the signal peptide. Cysteine 110 and cysteine 281 are disulfide-bonded. The active-site Charge relay system is serine 194. The N-linked (GlcNAc...) asparagine glycan is linked to asparagine 229. Catalysis depends on charge relay system residues aspartate 343 and histidine 376. Cysteine 359 and cysteine 404 are joined by a disulfide.

Belongs to the AB hydrolase superfamily. Lipase family. Class Lip subfamily.

Its subcellular location is the secreted. It carries out the reaction a triacylglycerol + H2O = a diacylglycerol + a fatty acid + H(+). Its activity is regulated as follows. Fe(2)+, Fe(3+), Hg(2+) as well as ethylenediaminetetraacetic acid (EDTA) and phenylmethanesulfonyl fluoride (PMSF) strongly inhibit the lipase activity. Surfactants such as Tween 20, Tween 80 and TritonX-100 show also inhibitory effect in the lipase activity. Sodium dodecyl sulfate (SDS) sharply decreases the lipase activity by 85%. Methanol, ethanol, and acetone have also negative effect on the lipase activity, with residual activities at 48%, 24% and 44% respectively. Finally, lipase activity is almost lost in the presence of isopropanol alcohol. In terms of biological role, secreted lipase that is able to hydrolyze both the neutral triacylglycerols and the monopalmitate ester Tween 40, allowing the use of hydrolyzed products as carbon sources. Exhibits a preference for the short and medium chain length p-NP (C4 and C8 acyl group) esters rather than the long chain length p-NP esters (C12, C16 and C18 acyl group). Has broad lipolytic activity, which may be important for colonization and subsequent infection, therefore contributing to the persistence and virulence in human tissue. The polypeptide is Lipase 5 (Candida albicans (strain SC5314 / ATCC MYA-2876) (Yeast)).